A 474-amino-acid polypeptide reads, in one-letter code: Cysteine--tRNA ligase (474 aa).

Cys29 serves as a coordination point for Zn(2+). Residues 31–41 (ATVQGEPHVGH) carry the 'HIGH' region motif. Zn(2+) is bound by residues Cys211, His236, and Glu240. The short motif at 267–271 (KMSKS) is the 'KMSKS' region element. Lys270 lines the ATP pocket.

It belongs to the class-I aminoacyl-tRNA synthetase family. Monomer. The cofactor is Zn(2+).

It localises to the cytoplasm. The enzyme catalyses tRNA(Cys) + L-cysteine + ATP = L-cysteinyl-tRNA(Cys) + AMP + diphosphate. The protein is Cysteine--tRNA ligase of Beutenbergia cavernae (strain ATCC BAA-8 / DSM 12333 / CCUG 43141 / JCM 11478 / NBRC 16432 / NCIMB 13614 / HKI 0122).